The primary structure comprises 354 residues: Uroporphyrinogen decarboxylase (354 aa).

Substrate contacts are provided by residues Arg-27 to Arg-31, Asp-77, Tyr-153, Thr-208, and His-326.

It belongs to the uroporphyrinogen decarboxylase family. Homodimer.

Its subcellular location is the cytoplasm. It carries out the reaction uroporphyrinogen III + 4 H(+) = coproporphyrinogen III + 4 CO2. The protein operates within porphyrin-containing compound metabolism; protoporphyrin-IX biosynthesis; coproporphyrinogen-III from 5-aminolevulinate: step 4/4. Functionally, catalyzes the decarboxylation of four acetate groups of uroporphyrinogen-III to yield coproporphyrinogen-III. This Neisseria meningitidis serogroup C (strain 053442) protein is Uroporphyrinogen decarboxylase.